A 289-amino-acid polypeptide reads, in one-letter code: Putative 2-aminoethylphosphonate transport system permease protein PhnU (289 aa).

Helical transmembrane passes span 19 to 39 (WLLL…SLIV), 76 to 96 (FFAT…LVFI), 111 to 131 (FIAL…GSAG), 150 to 170 (FLYS…PLVM), 202 to 222 (VIFP…LLLT), and 254 to 274 (YTVA…LFSL). An ABC transmembrane type-1 domain is found at 68–275 (LLNTLQIAFF…VLSLGLFSLY (208 aa)).

Belongs to the binding-protein-dependent transport system permease family.

It is found in the cell inner membrane. Functionally, probably part of the PhnSTUV complex (TC 3.A.1.11.5) involved in 2-aminoethylphosphonate import. Probably responsible for the translocation of the substrate across the membrane. This is Putative 2-aminoethylphosphonate transport system permease protein PhnU (phnU) from Salmonella paratyphi A (strain ATCC 9150 / SARB42).